Reading from the N-terminus, the 212-residue chain is MAKQYDVLFRLLLIGDSGVGKTCLLCRFTDNEFHSSHISTIGVDFKMKTIDVDGIKVRIQIWDTAGQERYQTITKQYYRRAQGIFLVYDISSERSYQHIMKWVSDVDEYAPEGVQKILIGNKADEEQKRQVGREQGQQLAKEYGMDFYETSACTNLNIKESFTRLTELVLQAHRKELDGLRTRASNELALAELEEDEGKPEGPANSSKTCWC.

GTP contacts are provided by S17, G18, V19, G20, K21, T22, C23, S35, S39, and T40. T22 contacts Mg(2+). 2 short sequence motifs (switch) span residues 31-45 (NEFHSSHISTIGVDF) and 63-80 (DTAGQERYQTITKQYYRR). Mg(2+)-binding residues include T40 and D63. Positions 66, 121, 122, 124, 151, and 152 each coordinate GTP. Positions 192-212 (ELEEDEGKPEGPANSSKTCWC) are disordered. S-geranylgeranyl cysteine attachment occurs at residues C210 and C212. A Cysteine methyl ester modification is found at C212.

The protein belongs to the small GTPase superfamily. Rab family. In terms of assembly, the GTP bound form of RAB15 interacts with REP15. Interacts (GTP-bound form) with MICAL1, MICAL3, MICALCL, EHBP1 and EHBP1L1. Mg(2+) is required as a cofactor.

It is found in the cell membrane. It carries out the reaction GTP + H2O = GDP + phosphate + H(+). Its activity is regulated as follows. Regulated by guanine nucleotide exchange factors (GEFs) which promote the exchange of bound GDP for free GTP. Regulated by GTPase activating proteins (GAPs) which increase the GTP hydrolysis activity. Inhibited by GDP dissociation inhibitors (GDIs). Its function is as follows. The small GTPases Rab are key regulators of intracellular membrane trafficking, from the formation of transport vesicles to their fusion with membranes. Rabs cycle between an inactive GDP-bound form and an active GTP-bound form that is able to recruit to membranes different sets of downstream effectors directly responsible for vesicle formation, movement, tethering and fusion. RAB15 may act in concert with RAB3A in regulating aspects of synaptic vesicle membrane flow within the nerve terminal. This Mus musculus (Mouse) protein is Ras-related protein Rab-15.